We begin with the raw amino-acid sequence, 476 residues long: MIRPQLRTAGLGRCLLPGLLLLLVPVLWAGAEKLHTQPSCPAVCQPTRCPALPTCALGTTPVFDLCRCCRVCPAAEREVCGGAQGQPCAPGLQCLQPLRPGFPSTCGCPTLGGAVCGSDRRTYPSMCALRAENRAARRLGKVPAVPVQWGNCGDTGTRSAGPLRRNYNFIAAVVEKVAPSVVHVQLWGRLLHGSRLVPVYSGSGFIVSEDGLIITNAHVVRNQQWIEVVLQNGARYEAVVKDIDLKLDLAVIKIESNAELPVLMLGRSSDLRAGEFVVALGSPFSLQNTATAGIVSTKQRGGKELGMKDSDMDYVQIDATINYGNSGGPLVNLDGDVIGVNSLRVTDGISFAIPSDRVRQFLAEYHEHQMKGKAFSNKKYLGLQMLSLTVPLSEELKMHYPDFPDVSSGVYVCKVVEGTAAQSSGLRDHDVIVNINGKPITTTTDVVKALDSDSLSMAVLRGKDNLLLTVIPETIN.

Residues 1–31 (MIRPQLRTAGLGRCLLPGLLLLLVPVLWAGA) form the signal peptide. One can recognise an IGFBP N-terminal domain in the interval 36–109 (TQPSCPAVCQ…PGFPSTCGCP (74 aa)). Intrachain disulfides connect cysteine 40-cysteine 66, cysteine 44-cysteine 68, cysteine 49-cysteine 69, cysteine 55-cysteine 72, cysteine 80-cysteine 94, cysteine 88-cysteine 106, cysteine 108-cysteine 127, and cysteine 116-cysteine 152. Residues 88–154 (CAPGLQCLQP…VPVQWGNCGD (67 aa)) enclose the Kazal-like domain. The serine protease stretch occupies residues 202-362 (GSGFIVSEDG…IPSDRVRQFL (161 aa)). Residues histidine 218, aspartate 248, and serine 326 each act as charge relay system in the active site. In terms of domain architecture, PDZ spans 383-474 (LQMLSLTVPL…NLLLTVIPET (92 aa)).

It belongs to the peptidase S1C family.

Its subcellular location is the secreted. In terms of biological role, serine protease. In Homo sapiens (Human), this protein is Serine protease HTRA4 (HTRA4).